The sequence spans 35 residues: uncharacterized protein (35 aa).

The first 18 residues, 1 to 18, serve as a signal peptide directing secretion; sequence MRSLVFVQLSLLSWEIFC.

This is an uncharacterized protein from Saccharomyces cerevisiae (strain ATCC 204508 / S288c) (Baker's yeast).